Reading from the N-terminus, the 550-residue chain is Leucine-rich repeat, immunoglobulin-like domain and transmembrane domain-containing protein 2 (550 aa).

The signal sequence occupies residues 1 to 19 (MASVFHYFLLVLVFLDTHA). Positions 23–54 (FCLPGCTCSEESFGRTLQCTSVSLGKIPGNLS) constitute an LRRNT domain. A glycan (N-linked (GlcNAc...) asparagine) is linked at asparagine 52. 4 LRR repeats span residues 80-103 (TLEYLWLNFNNISVIHLGALEHLP), 104-125 (ELRELRLEGNKLCSVPWTAFRA), 128-149 (LLRVLDLKRNKIDALPELALQF), and 152-173 (SLTYLDLSSNRLTVVSKSVFLN). One can recognise an LRRCT domain in the interval 200–252 (NPWVCDCRLRGLVQFVKSITLPVILVNSYLICQGPLSKAGQLFHETELSACMK). Residues 253 to 341 (PQISTPSANI…SIGKSNLVIS (89 aa)) enclose the Ig-like domain. Cysteine 274 and cysteine 327 are disulfide-bonded. The region spanning 361–451 (EGNAYIDLRV…QGQCVAFVTG (91 aa)) is the Fibronectin type-III domain. The helical transmembrane segment at 466–486 (VTVVLCVVLLAVPVGAYAWAA) threads the bilayer. The disordered stretch occupies residues 508-550 (SCTPAAPQSKDGSFREHPAVCDDGEGHIDTEGDKEKGGTEDNS). A compositionally biased stretch (basic and acidic residues) spans 519-550 (GSFREHPAVCDDGEGHIDTEGDKEKGGTEDNS).

As to quaternary structure, interacts with LRIT1; may form a heterodimer with LRIT1.

It is found in the membrane. The chain is Leucine-rich repeat, immunoglobulin-like domain and transmembrane domain-containing protein 2 (LRIT2) from Homo sapiens (Human).